The sequence spans 168 residues: N-alpha-acetyltransferase 50 (168 aa).

Positions 5–154 constitute an N-acetyltransferase domain; it reads IELGDVTPHN…DAHVLQKSLR (150 aa). Tyr30 serves as a coordination point for substrate. Tyr72 is an active-site residue. Residue Met74 participates in substrate binding. 76–89 contacts acetyl-CoA; the sequence is LGCLAPYRRLGIGT. The active site involves His111. 116 to 125 lines the CoA pocket; the sequence is NESAIDFYQK. The substrate stretch occupies residues 137–140; sequence YYKR.

Belongs to the acetyltransferase family. GNAT subfamily. In terms of assembly, interacts with naa35.

The protein resides in the cytoplasm. The protein localises to the nucleus. It catalyses the reaction N-terminal L-methionyl-L-alanyl-[protein] + acetyl-CoA = N-terminal N(alpha)-acetyl-L-methionyl-L-alanyl-[protein] + CoA + H(+). The catalysed reaction is N-terminal L-methionyl-L-seryl-[protein] + acetyl-CoA = N-terminal N(alpha)-acetyl-L-methionyl-L-seryl-[protein] + CoA + H(+). The enzyme catalyses N-terminal L-methionyl-L-valyl-[protein] + acetyl-CoA = N-terminal N(alpha)-acetyl-L-methionyl-L-valyl-[protein] + CoA + H(+). It carries out the reaction N-terminal L-methionyl-L-threonyl-[protein] + acetyl-CoA = N-terminal N(alpha)-acetyl-L-methionyl-L-threonyl-[protein] + CoA + H(+). It catalyses the reaction N-terminal L-methionyl-L-lysyl-[protein] + acetyl-CoA = N-terminal N(alpha)-acetyl-L-methionyl-L-lysyl-[protein] + CoA + H(+). The catalysed reaction is N-terminal L-methionyl-L-leucyl-[protein] + acetyl-CoA = N-terminal N(alpha)-acetyl-L-methionyl-L-leucyl-[protein] + CoA + H(+). The enzyme catalyses N-terminal L-methionyl-L-phenylalanyl-[protein] + acetyl-CoA = N-terminal N(alpha)-acetyl-L-methionyl-L-phenylalanyl-[protein] + CoA + H(+). It carries out the reaction N-terminal L-methionyl-L-tyrosyl-[protein] + acetyl-CoA = N-terminal N(alpha)-acetyl-L-methionyl-L-tyrosyl-[protein] + CoA + H(+). N-alpha-acetyltransferase that acetylates the N-terminus of proteins that retain their initiating methionine. Has a broad substrate specificity: able to acetylate the initiator methionine of most peptides, except for those with a proline in second position. Also displays N-epsilon-acetyltransferase activity by mediating acetylation of the side chain of specific lysines on proteins. The relevance of N-epsilon-acetyltransferase activity is however unclear. Required for sister chromatid cohesion during mitosis by promoting binding of CDCA5/sororin to cohesin. Essential in embryonic cell proliferation and survival. The polypeptide is N-alpha-acetyltransferase 50 (naa50) (Danio rerio (Zebrafish)).